The sequence spans 408 residues: UDP-glucose 4-epimerase 2 (408 aa).

13–44 provides a ligand contact to NAD(+); that stretch reads TVLVTGGAGYIGSHAVLQLLLAGFRAVVVDNL. S138 provides a ligand contact to substrate. Y162 functions as the Proton acceptor in the catalytic mechanism. The segment at 369–408 is disordered; sequence GSPKQNGHCTNGFSESTRHNGHNGYGLVDSAKHNGNGHFH. The segment covering 370–383 has biased composition (polar residues); it reads SPKQNGHCTNGFSE.

It belongs to the NAD(P)-dependent epimerase/dehydratase family. NAD(+) serves as cofactor.

The enzyme catalyses UDP-alpha-D-glucose = UDP-alpha-D-galactose. It participates in carbohydrate metabolism; galactose metabolism. In terms of biological role, catalyzes the interconversion between UDP-glucose and UDP-galactose. The protein is UDP-glucose 4-epimerase 2 (UGE-2) of Oryza sativa subsp. japonica (Rice).